The sequence spans 96 residues: Small ribosomal subunit protein bS6 (96 aa).

It belongs to the bacterial ribosomal protein bS6 family.

In terms of biological role, binds together with bS18 to 16S ribosomal RNA. The polypeptide is Small ribosomal subunit protein bS6 (Streptococcus suis (strain 98HAH33)).